The following is a 243-amino-acid chain: UPF0173 metal-dependent hydrolase Xaut_3786 (243 aa).

This sequence belongs to the UPF0173 family.

The protein is UPF0173 metal-dependent hydrolase Xaut_3786 of Xanthobacter autotrophicus (strain ATCC BAA-1158 / Py2).